We begin with the raw amino-acid sequence, 298 residues long: Syntaxin-4 (298 aa).

Over 1 to 274 (MRDRTHELRQ…NQKKARKKKV (274 aa)) the chain is Cytoplasmic. 7 positions are modified to phosphoserine: serine 15, serine 29, serine 35, serine 36, serine 117, serine 208, and serine 248. A coiled-coil region spans residues 38-163 (DDEFFQKVQT…ERIRRQLKIT (126 aa)). The segment at 154-298 (ERIRRQLKIT…VIIGITITVG (145 aa)) is interaction with CENPF. One can recognise a t-SNARE coiled-coil homology domain in the interval 200-262 (LNEISARHSE…ERGQEHVKIA (63 aa)). A helical; Anchor for type IV membrane protein membrane pass occupies residues 275-295 (MIAICVSVTVLILAVIIGITI). Residues 296–298 (TVG) lie on the Extracellular side of the membrane.

The protein belongs to the syntaxin family. In terms of assembly, found in a complex with VAMP8 and SNAP23. Detected in a complex with SNAP23 and STXBP4. Interacts with SNAP23 and SNAPIN. Interacts with VAMP2. Interacts with LLGL1. Interacts (via C-terminus) with CENPF. Interacts with DOC2B. Interacts with STXBP3; excludes interaction with DOC2B and SNAP25. Interacts with STXBP4; excludes interaction with VAMP2. Component of the SNARE complex composed of STX4, SNAP23 and VAMP7 that interacts with SYT7 during lysosomal exocytosis. Interacts with STXBP6. Interacts with STXBP5L. As to expression, expressed in all tissues tested including adipose, brain, testis, intestine, liver, heart, spleen, skeletal muscle and kidney.

It is found in the cell membrane. It localises to the cell projection. Its subcellular location is the neuron projection. The protein resides in the stereocilium. In terms of biological role, plasma membrane t-SNARE that mediates docking of transport vesicles. Necessary for the translocation of SLC2A4 from intracellular vesicles to the plasma membrane. In neurons, recruited at neurite tips to membrane domains rich in the phospholipid 1-oleoyl-2-palmitoyl-PC (OPPC) which promotes neurite tip surface expression of the dopamine transporter SLC6A3/DAT by facilitating fusion of SLC6A3-containing transport vesicles with the plasma membrane. Together with STXB3 and VAMP2, may also play a role in docking/fusion of intracellular GLUT4-containing vesicles with the cell surface in adipocytes and in docking of synaptic vesicles at presynaptic active zones. Required for normal hearing. The polypeptide is Syntaxin-4 (Stx4) (Rattus norvegicus (Rat)).